We begin with the raw amino-acid sequence, 606 residues long: UvrABC system protein C (606 aa).

In terms of domain architecture, GIY-YIG spans 19–97; that stretch reads QSCGVYQMIG…IKSLKPPYNI (79 aa). Residues 207–242 enclose the UVR domain; that stretch reads EKVKKQLSSTMEKCSKEENYELAAIYRDRLKFLEQI.

Belongs to the UvrC family. As to quaternary structure, interacts with UvrB in an incision complex.

The protein resides in the cytoplasm. Functionally, the UvrABC repair system catalyzes the recognition and processing of DNA lesions. UvrC both incises the 5' and 3' sides of the lesion. The N-terminal half is responsible for the 3' incision and the C-terminal half is responsible for the 5' incision. This is UvrABC system protein C from Wolbachia sp. subsp. Brugia malayi (strain TRS).